We begin with the raw amino-acid sequence, 373 residues long: Alanine racemase (373 aa).

The active-site Proton acceptor; specific for D-alanine is K35. The residue at position 35 (K35) is an N6-(pyridoxal phosphate)lysine. A substrate-binding site is contributed by R130. Residue Y253 is the Proton acceptor; specific for L-alanine of the active site. Substrate is bound at residue M305.

This sequence belongs to the alanine racemase family. The cofactor is pyridoxal 5'-phosphate.

The enzyme catalyses L-alanine = D-alanine. Its pathway is amino-acid biosynthesis; D-alanine biosynthesis; D-alanine from L-alanine: step 1/1. Functionally, catalyzes the interconversion of L-alanine and D-alanine. May also act on other amino acids. The sequence is that of Alanine racemase (alr) from Cupriavidus necator (strain ATCC 17699 / DSM 428 / KCTC 22496 / NCIMB 10442 / H16 / Stanier 337) (Ralstonia eutropha).